The sequence spans 211 residues: Succinate dehydrogenase subunit 4, mitochondrial (211 aa).

The transit peptide at 1–36 directs the protein to the mitochondrion; the sequence is MASRLLARSKALALALSRADAAAPGPAAGVQWLRTL. The tract at residues 41 to 64 is disordered; that stretch reads RDPAAAASPAPAPRQPAVGSPLGL. H166 lines the heme pocket. Y179 contacts a ubiquinone. A helical transmembrane segment spans residues 188 to 210; it reads WVFIYFKILLIIMAKETVVYFDL.

In terms of assembly, component of complex II composed of eight subunits in plants: four classical SDH subunits SDH1, SDH2, SDH3 and SDH4 (a flavoprotein (FP), an iron-sulfur protein (IP), and a cytochrome b composed of a large and a small subunit.), as well as four subunits unknown in mitochondria from bacteria and heterotrophic eukaryotes. The cofactor is heme.

The protein resides in the mitochondrion inner membrane. Its pathway is carbohydrate metabolism; tricarboxylic acid cycle. In terms of biological role, membrane-anchoring subunit of succinate dehydrogenase (SDH). In Oryza sativa subsp. japonica (Rice), this protein is Succinate dehydrogenase subunit 4, mitochondrial.